A 269-amino-acid polypeptide reads, in one-letter code: Hydroxyethylthiazole kinase (269 aa).

Met46 is a substrate binding site. 2 residues coordinate ATP: Arg122 and Thr168. Gly195 provides a ligand contact to substrate.

It belongs to the Thz kinase family. Mg(2+) serves as cofactor.

It catalyses the reaction 5-(2-hydroxyethyl)-4-methylthiazole + ATP = 4-methyl-5-(2-phosphooxyethyl)-thiazole + ADP + H(+). Its pathway is cofactor biosynthesis; thiamine diphosphate biosynthesis; 4-methyl-5-(2-phosphoethyl)-thiazole from 5-(2-hydroxyethyl)-4-methylthiazole: step 1/1. Its function is as follows. Catalyzes the phosphorylation of the hydroxyl group of 4-methyl-5-beta-hydroxyethylthiazole (THZ). In Chloroflexus aurantiacus (strain ATCC 29366 / DSM 635 / J-10-fl), this protein is Hydroxyethylthiazole kinase.